The chain runs to 315 residues: Large ribosomal subunit protein uL10 (315 aa).

A compositionally biased stretch (low complexity) spans 285-294 (AAAPAASAAP). Residues 285-315 (AAAPAASAAPAKEEKEESEESDDDMGFGLFD) are disordered. The span at 300 to 309 (EESEESDDDM) shows a compositional bias: acidic residues.

This sequence belongs to the universal ribosomal protein uL10 family. As to quaternary structure, P0 forms a pentameric complex by interaction with dimers of P1 and P2. Post-translationally, phosphorylated.

Its function is as follows. Ribosomal protein P0 is the functional equivalent of E.coli protein L10. This Lithobates sylvaticus (Wood frog) protein is Large ribosomal subunit protein uL10 (RPLP0).